We begin with the raw amino-acid sequence, 592 residues long: Peroxisomal targeting signal receptor (592 aa).

A Glycyl cysteine thioester (Cys-Gly) (interchain with G-Cter in ubiquitin) cross-link involves residue Cys-10. Residues 11-33 (SVNGNAVAQFNKHTQQDRSLQQQ) are amphipathic helix 1 (AH1). Residue Lys-22 forms a Glycyl lysine isopeptide (Lys-Gly) (interchain with G-Cter in ubiquitin) linkage. Residues 22 to 46 (KHTQQDRSLQQQVANQHGNVAQNQG) are compositionally biased toward polar residues. Residues 22–49 (KHTQQDRSLQQQVANQHGNVAQNQGFKK) are disordered. The interval 58–76 (RANLDQFMNNGAPQNSFQF) is amphipathic helix 2 (AH2). 3 short sequence motifs (wxxxF/Y motif) span residues 100–104 (WSQDF), 128–132 (WASEF), and 185–189 (WENQF). The amphipathic helix 4 (AH4) stretch occupies residues 223-239 (FQEVWDSLNSESFENDF). Positions 262–266 (WEKDF) match the WxxxF/Y motif 4 motif. TPR repeat units lie at residues 295-329 (DQDP…DENH), 330-363 (VDAW…HPEN), 440-473 (ADVQ…RPDD), 475-507 (ILWN…KPTF), and 509-541 (RARY…HQVE).

It belongs to the peroxisomal targeting signal receptor family. As to quaternary structure, interacts (via WxxxF/Y and LVxEF motifs) with PEX14; promoting translocation through the PEX13-PEX14 docking complex. Post-translationally, monoubiquitinated at Cys-10 by PEX2 during PEX5 passage through the retrotranslocation channel: monoubiquitination acts as a signal for PEX5 extraction and is required for proper export from peroxisomes and recycling. When PEX5 recycling is compromised, polyubiquitinated at Lys-22 by PEX10 during its passage through the retrotranslocation channel, leading to its degradation.

Its subcellular location is the cytoplasm. The protein resides in the cytosol. It localises to the peroxisome matrix. Its function is as follows. Receptor that mediates peroxisomal import of proteins containing a C-terminal PTS1-type tripeptide peroxisomal targeting signal (SKL-type). Binds to cargo proteins containing a PTS1 peroxisomal targeting signal in the cytosol, and translocates them into the peroxisome matrix by passing through the PEX13-PEX14 docking complex along with cargo proteins. PEX5 receptor is then retrotranslocated into the cytosol, leading to release of bound cargo in the peroxisome matrix, and reset for a subsequent peroxisome import cycle. This is Peroxisomal targeting signal receptor (PEX5) from Candida albicans (strain SC5314 / ATCC MYA-2876) (Yeast).